The primary structure comprises 239 residues: Sugar fermentation stimulation protein homolog (239 aa).

It belongs to the SfsA family.

In Shewanella woodyi (strain ATCC 51908 / MS32), this protein is Sugar fermentation stimulation protein homolog.